A 301-amino-acid chain; its full sequence is Oxygen-dependent coproporphyrinogen-III oxidase (301 aa).

The important for dimerization stretch occupies residues 49–58 (VMVDGAVIEK). Serine 93 serves as a coordination point for substrate. The Proton donor role is filled by histidine 107. Residues 109–111 (NVR) and 259–261 (GGR) each bind substrate. The segment at 241-276 (YAEFNLVIDRGTKFGLQSGGRTESILISLPPRARWG) is important for dimerization.

Belongs to the aerobic coproporphyrinogen-III oxidase family. As to quaternary structure, homodimer.

The protein localises to the cytoplasm. The enzyme catalyses coproporphyrinogen III + O2 + 2 H(+) = protoporphyrinogen IX + 2 CO2 + 2 H2O. It functions in the pathway porphyrin-containing compound metabolism; protoporphyrin-IX biosynthesis; protoporphyrinogen-IX from coproporphyrinogen-III (O2 route): step 1/1. Its function is as follows. Involved in the heme biosynthesis. Catalyzes the aerobic oxidative decarboxylation of propionate groups of rings A and B of coproporphyrinogen-III to yield the vinyl groups in protoporphyrinogen-IX. The sequence is that of Oxygen-dependent coproporphyrinogen-III oxidase from Leishmania major.